We begin with the raw amino-acid sequence, 630 residues long: Sodium-dependent serotonin transporter (630 aa).

Topologically, residues 1 to 87 are cytoplasmic; the sequence is METTPLNSQK…ERETWGKKMD (87 aa). Positions 23–60 are disordered; that stretch reads ENGVLQKGVPTTADRAEPSQISNGYSAVPSTSAGDEAS. Residues 41–55 show a composition bias toward polar residues; it reads SQISNGYSAVPSTSA. Phosphotyrosine is present on Y47. Residues 88–112 traverse the membrane as a helical segment; the sequence is FLLSVIGYAVDLGNIWRFPYICYQN. G94, A96, V97, D98, and N101 together coordinate Na(+). D98 provides a ligand contact to serotonin. Residues 113 to 115 lie on the Extracellular side of the membrane; sequence GGG. Residues 116 to 135 traverse the membrane as a helical segment; sequence AFLLPYTIMAIFGGIPLFYM. Over 136–160 the chain is Cytoplasmic; the sequence is ELALGQYHRNGCISIWRKICPIFKG. Phosphotyrosine is present on Y142. A helical membrane pass occupies residues 161–186; the sequence is IGYAICIIAFYIASYYNTIIAWALYY. Residues 187–252 lie on the Extracellular side of the membrane; the sequence is LISSLTDRLP…KGLQDLGTIS (66 aa). Cysteines 200 and 209 form a disulfide. N-linked (GlcNAc...) asparagine glycans are attached at residues N208 and N217. Residues 253-271 form a helical membrane-spanning segment; that stretch reads WQLTLCIVLIFTVIYFSIW. Topologically, residues 272 to 277 are cytoplasmic; sequence KGVKTS. T276 is modified (phosphothreonine). The helical transmembrane segment at 278–297 threads the bilayer; sequence GKVVWVTATFPYIVLSVLLV. Residues 298–324 lie on the Extracellular side of the membrane; that stretch reads RGATLPGAWRGVVFYLKPNWQKLLETG. The chain crosses the membrane as a helical span at residues 325-347; the sequence is VWVDAAAQIFFSLGPGFGVLLAF. S336 serves as a coordination point for Na(+). Topologically, residues 348–360 are cytoplasmic; sequence ASYNKFNNNCYQD. A helical membrane pass occupies residues 361–380; it reads ALVTSVVNCMTSFVSGFVIF. Na(+) is bound at residue N368. Residues 381-421 are Extracellular-facing; sequence TVLGYMAEMRNEDVSEVAKDAGPSLLFITYAEAIANMPAST. The helical transmembrane segment at 422–443 threads the bilayer; the sequence is FFAIIFFLMLITLGLDSTFAGL. Na(+) contacts are provided by L434, D437, and S438. Position 439 (T439) interacts with serotonin. Over 444-463 the chain is Cytoplasmic; sequence EGVITAVLDEFPHIWAKRRE. The chain crosses the membrane as a helical span at residues 464–483; that stretch reads WFVLIVVITCVLGSLLTLTS. Residues 484–494 are Extracellular-facing; it reads GGAYVVTLLEE. Residues E494 and Y495 each contribute to the serotonin site. Residues 495 to 516 traverse the membrane as a helical segment; the sequence is YATGPAVLTVALIEAVAVSWFY. At 517–538 the chain is on the cytoplasmic side; it reads GITQFCSDVKEMLGFSPGWFWR. A helical transmembrane segment spans residues 539 to 558; it reads ICWVAISPLFLLFIICSFLM. 2 residues coordinate serotonin: F556 and S559. The Extracellular portion of the chain corresponds to 559-574; the sequence is SPPQLRLFQYNYPHWS. Residues 575-595 form a helical membrane-spanning segment; the sequence is IVLGYCIGMSSVICIPTYIIY. The Cytoplasmic portion of the chain corresponds to 596 to 630; that stretch reads RLISTPGTLKERIIKSITPETPTEIPCGDIRMNAV. The segment at 616–624 is interaction with RAB4A; sequence TPTEIPCGD.

It belongs to the sodium:neurotransmitter symporter (SNF) (TC 2.A.22) family. SLC6A4 subfamily. Monomer or homooligomer. Interacts with TGFB1I1. Interacts with SEC23A, SEC24C and PATJ. Interacts with NOS1; the interaction may diminish the cell surface localization of SERT in the brain and, correspondingly, reduce serotonin reuptake. Interacts (via C-terminus) with SCAMP2; the interaction is direct and retains transporter molecules intracellularly. Interacts with filamentous actin and STX1A. Interacts (via the N-terminus) with STX1A (via the H3 domain); this interaction regulates SLC4A6 channel conductance. Interacts with ITGAV:ITGB3. Interacts (via C-terminus) with ITGB3; this interaction regulates SLC6A4 trafficking. Phosphorylation at Thr-276 increases 5-HT uptake and is required for cGMP-mediated SERT regulation. In terms of tissue distribution, expressed in the intestinal crypt epithelial cells and myenteric neurons of the small intestine (at protein level). Expressed in the brain.

The protein resides in the cell membrane. It localises to the endomembrane system. The protein localises to the endosome membrane. Its subcellular location is the synapse. It is found in the cell junction. The protein resides in the focal adhesion. It localises to the cell projection. The protein localises to the neuron projection. The catalysed reaction is serotonin(out) + K(+)(in) + Na(+)(out) + H(+)(in) = serotonin(in) + K(+)(out) + Na(+)(in) + H(+)(out). Its function is as follows. Serotonin transporter that cotransports serotonin with one Na(+) ion in exchange for one K(+) ion and possibly one proton in an overall electroneutral transport cycle. Transports serotonin across the plasma membrane from the extracellular compartment to the cytosol thus limiting serotonin intercellular signaling. Essential for serotonin homeostasis in the central nervous system. In the developing somatosensory cortex, acts in glutamatergic neurons to control serotonin uptake and its trophic functions accounting for proper spatial organization of cortical neurons and elaboration of sensory circuits. In the mature cortex, acts primarily in brainstem raphe neurons to mediate serotonin uptake from the synaptic cleft back into the pre-synaptic terminal thus terminating serotonin signaling at the synapse. Modulates mucosal serotonin levels in the gastrointestinal tract through uptake and clearance of serotonin in enterocytes. Required for enteric neurogenesis and gastrointestinal reflexes. Regulates blood serotonin levels by ensuring rapid high affinity uptake of serotonin from plasma to platelets, where it is further stored in dense granules via vesicular monoamine transporters and then released upon stimulation. Mechanistically, the transport cycle starts with an outward-open conformation having Na1(+) and Cl(-) sites occupied. The binding of a second extracellular Na2(+) ion and serotonin substrate leads to structural changes to outward-occluded to inward-occluded to inward-open, where the Na2(+) ion and serotonin are released into the cytosol. Binding of intracellular K(+) ion induces conformational transitions to inward-occluded to outward-open and completes the cycle by releasing K(+) possibly together with a proton bound to Asp-98 into the extracellular compartment. Na1(+) and Cl(-) ions remain bound throughout the transport cycle. Additionally, displays serotonin-induced channel-like conductance for monovalent cations, mainly Na(+) ions. The channel activity is uncoupled from the transport cycle and may contribute to the membrane resting potential or excitability. This is Sodium-dependent serotonin transporter (Slc6a4) from Rattus norvegicus (Rat).